A 361-amino-acid chain; its full sequence is Cyclin-Y-like protein 2 (361 aa).

Positions M204–N286 constitute a Cyclin N-terminal domain.

Belongs to the cyclin family. Cyclin Y subfamily.

The sequence is that of Cyclin-Y-like protein 2 (CCNYL2) from Homo sapiens (Human).